The primary structure comprises 789 residues: Glycerol-3-phosphate acyltransferase (789 aa).

The HXXXXD motif motif lies at 275-280; the sequence is SHRSYI.

It belongs to the GPAT/DAPAT family.

The protein resides in the cell membrane. It catalyses the reaction sn-glycerol 3-phosphate + an acyl-CoA = a 1-acyl-sn-glycero-3-phosphate + CoA. It functions in the pathway phospholipid metabolism; CDP-diacylglycerol biosynthesis; CDP-diacylglycerol from sn-glycerol 3-phosphate: step 1/3. This is Glycerol-3-phosphate acyltransferase from Mycobacterium bovis (strain BCG / Pasteur 1173P2).